Reading from the N-terminus, the 328-residue chain is Serine protease 27 (328 aa).

The first 22 residues, 1–22 (MRQPHITALLLLPLLLRSGTEG), serve as a signal peptide directing secretion. A propeptide spans 23–37 (AEAMRACGHPRMFNR) (activation peptide). The Peptidase S1 domain occupies 38-280 (MVGGEDALEG…HYQWIHQIIP (243 aa)). C63 and C79 are joined by a disulfide. Catalysis depends on H78, which acts as the Charge relay system. An N-linked (GlcNAc...) asparagine glycan is attached at N82. Catalysis depends on D127, which acts as the Charge relay system. 3 disulfide bridges follow: C161-C238, C194-C217, and C228-C256. The active-site Charge relay system is S232.

This sequence belongs to the peptidase S1 family.

Its subcellular location is the secreted. In Rattus norvegicus (Rat), this protein is Serine protease 27 (Prss27).